A 956-amino-acid chain; its full sequence is Valine--tRNA ligase (956 aa).

The 'HIGH' region signature appears at 69–79 (PNITGVLHMGH). Positions 566–570 (KMSKS) match the 'KMSKS' region motif. K569 contributes to the ATP binding site. A coiled-coil region spans residues 885–911 (LCARLQKAWQKARQKVQQVERKLADAQ).

It belongs to the class-I aminoacyl-tRNA synthetase family. ValS type 1 subfamily. As to quaternary structure, monomer.

The protein resides in the cytoplasm. The enzyme catalyses tRNA(Val) + L-valine + ATP = L-valyl-tRNA(Val) + AMP + diphosphate. Functionally, catalyzes the attachment of valine to tRNA(Val). As ValRS can inadvertently accommodate and process structurally similar amino acids such as threonine, to avoid such errors, it has a 'posttransfer' editing activity that hydrolyzes mischarged Thr-tRNA(Val) in a tRNA-dependent manner. In Treponema pallidum (strain Nichols), this protein is Valine--tRNA ligase.